The chain runs to 303 residues: Phenoloxidase-activating factor 2 (303 aa).

A disordered region spans residues 1–24 (PDRRPPEDPITPPPPTKEEQRAGC). The region spanning 36–292 (IIGDKDGEAK…LRDWIDDKVA (257 aa)) is the Peptidase S1 domain. Disulfide bonds link C173–C247, C206–C227, and C237–C268.

The protein belongs to the peptidase S1 family. As to quaternary structure, heterodimer.

It localises to the secreted. Functionally, binds and activates processed prophenoloxidases PPO1 and PPO2 and thus is involved in the activation of the prophenoloxidase cascade probably following the recognition of pathogen-derived products. Binds the A.niger cell wall component alpha-1,3-glucan, a fungal pathogen-associated molecular pattern (PAMP) that activates the host immune response. The polypeptide is Phenoloxidase-activating factor 2 (LOC113510063) (Galleria mellonella (Greater wax moth)).